The primary structure comprises 89 residues: Small ribosomal subunit protein uS14A (89 aa).

Belongs to the universal ribosomal protein uS14 family. In terms of assembly, part of the 30S ribosomal subunit. Contacts proteins S3 and S10.

Functionally, binds 16S rRNA, required for the assembly of 30S particles and may also be responsible for determining the conformation of the 16S rRNA at the A site. The sequence is that of Small ribosomal subunit protein uS14A from Staphylococcus aureus (strain Newman).